A 318-amino-acid polypeptide reads, in one-letter code: NADH-ubiquinone oxidoreductase chain 1 (318 aa).

8 helical membrane passes run 2–22, 69–89, 102–122, 146–166, 171–191, 222–242, 253–273, and 294–314; these read FLIN…FLTL, FLFT…WAPL, LLFI…SGWA, MTTI…TAFA, HLWL…STLA, LFFM…VILF, EIST…FLWV, and LPLT…LACI.

It belongs to the complex I subunit 1 family.

The protein localises to the mitochondrion inner membrane. It carries out the reaction a ubiquinone + NADH + 5 H(+)(in) = a ubiquinol + NAD(+) + 4 H(+)(out). Functionally, core subunit of the mitochondrial membrane respiratory chain NADH dehydrogenase (Complex I) that is believed to belong to the minimal assembly required for catalysis. Complex I functions in the transfer of electrons from NADH to the respiratory chain. The immediate electron acceptor for the enzyme is believed to be ubiquinone. In Loxodonta africana (African elephant), this protein is NADH-ubiquinone oxidoreductase chain 1 (MT-ND1).